We begin with the raw amino-acid sequence, 873 residues long: Zinc fingers and homeoboxes protein 1 (873 aa).

The disordered stretch occupies residues 1–63 (MASRRKSTTP…ESVDSDNQQN (63 aa)). Positions 18–30 (QDPDLELISDLDE) are enriched in acidic residues. Residue threonine 36 is modified to Phosphothreonine. A phosphoserine mark is found at serine 45, serine 47, and serine 48. 2 C2H2-type zinc fingers span residues 70 to 93 (YECK…DSEH) and 102 to 125 (YVCV…LKYH). Residue lysine 159 forms a Glycyl lysine isopeptide (Lys-Gly) (interchain with G-Cter in SUMO2) linkage. Serine 202 bears the Phosphoserine mark. Residues 202–236 (SVEDVPEEKENEIKPDREEIVENPSSSASESNTST) are disordered. Positions 212-221 (NEIKPDREEI) are enriched in basic and acidic residues. Over residues 223 to 236 (ENPSSSASESNTST) the composition is skewed to low complexity. A required for dimerization region spans residues 272–432 (NSNLIPKVLI…QNNVQKSQVP (161 aa)). The interval 272–564 (NSNLIPKVLI…AQPKQSWNPF (293 aa)) is required for interaction with NFYA. Residues 284 to 346 (NSIPTYNAAL…LKHGVSWTPE (63 aa)) constitute a DNA-binding region (homeobox 1). Residues lysine 441, lysine 454, lysine 485, and lysine 629 each participate in a glycyl lysine isopeptide (Lys-Gly) (interchain with G-Cter in SUMO2) cross-link. 2 DNA-binding regions (homeobox) span residues 464-526 (SFGI…KSNQ) and 569-630 (PQKF…EEKM). Disordered regions lie at residues 626 to 667 (KEEK…ICKK) and 732 to 769 (SSMN…INNW). Residue serine 648 is modified to Phosphoserine. The segment at residues 660–722 (STGKICKKTP…YAWKNGNLKW (63 aa)) is a DNA-binding region (homeobox 4). The required for nuclear localization stretch occupies residues 734–768 (MNGLSSLRKRGRGRPKGRGRGRPRGRPRGSKRINN). Basic residues predominate over residues 740-764 (LRKRGRGRPKGRGRGRPRGRPRGSK). Residue serine 774 is modified to Phosphoserine. A DNA-binding region (homeobox 5) is located at residues 777-832 (KFKTGTAILKDYYLKHKFLNEQDLDELVNKSHMGYEQVREWFAERQRRSELGIELF). Residues 829 to 873 (IELFEENEEEDEVIDDQEEDEEETDDSDTWEPPRHVKRKLSKSDD) form a disordered region. Residues 831–857 (LFEENEEEDEVIDDQEEDEEETDDSDT) show a composition bias toward acidic residues. Residues 831-873 (LFEENEEEDEVIDDQEEDEEETDDSDTWEPPRHVKRKLSKSDD) form a required for repressor activity region. Over residues 863 to 873 (HVKRKLSKSDD) the composition is skewed to basic residues.

It belongs to the ZHX family. Forms homodimers. Also forms heterodimers with ZHX3 which is a prerequisite for repressor activity and with ZHX2. Interacts with NFYA. Interacts with ATF7IP.

It is found in the nucleus. Its function is as follows. Acts as a transcriptional repressor. The protein is Zinc fingers and homeoboxes protein 1 (ZHX1) of Gorilla gorilla gorilla (Western lowland gorilla).